The sequence spans 117 residues: Toxin CSTX-8 (117 aa).

Positions 1 to 20 (MKVLVICAVLFLAIFSNSSA) are cleaved as a signal peptide. Residues 21-47 (ETEDDFLEDESFQADDVIPFLASEQVR) constitute a propeptide that is removed on maturation. Intrachain disulfides connect Cys50–Cys65, Cys57–Cys74, Cys64–Cys95, and Cys76–Cys93. The propeptide occupies 82-87 (RSETDR). Residue Thr116 is modified to Threonine amide.

This sequence belongs to the neurotoxin 19 (CSTX) family. 12 subfamily. In terms of assembly, heterodimer of A and B chains; disulfide-linked. Interacts with CSTX-1 (AC P81694), and with CSTX-9 (AC P58604). Expressed by the venom gland.

It localises to the secreted. The protein localises to the target cell membrane. Its function is as follows. Synergistic toxin that induces or increases a cytolytic effect when combined with CSTX-1 (AC P81694) or CSTX-9 (AC P58604). When alone, has a weak insecticidal activity, with an unknown molecular target. The polypeptide is Toxin CSTX-8 (Cupiennius salei (American wandering spider)).